Consider the following 208-residue polypeptide: ATP-dependent Clp protease proteolytic subunit 2 (208 aa).

The active-site Nucleophile is Ser-102. His-127 is an active-site residue.

Belongs to the peptidase S14 family. In terms of assembly, fourteen ClpP subunits assemble into 2 heptameric rings which stack back to back to give a disk-like structure with a central cavity, resembling the structure of eukaryotic proteasomes.

Its subcellular location is the cytoplasm. The enzyme catalyses Hydrolysis of proteins to small peptides in the presence of ATP and magnesium. alpha-casein is the usual test substrate. In the absence of ATP, only oligopeptides shorter than five residues are hydrolyzed (such as succinyl-Leu-Tyr-|-NHMec, and Leu-Tyr-Leu-|-Tyr-Trp, in which cleavage of the -Tyr-|-Leu- and -Tyr-|-Trp bonds also occurs).. Cleaves peptides in various proteins in a process that requires ATP hydrolysis. Has a chymotrypsin-like activity. Plays a major role in the degradation of misfolded proteins. The polypeptide is ATP-dependent Clp protease proteolytic subunit 2 (Chelativorans sp. (strain BNC1)).